We begin with the raw amino-acid sequence, 495 residues long: Flagellin (495 aa).

It belongs to the bacterial flagellin family.

The protein localises to the secreted. The protein resides in the bacterial flagellum. Flagellin is the subunit protein which polymerizes to form the filaments of bacterial flagella. This is Flagellin (fliC) from Salmonella paratyphi A (strain ATCC 9150 / SARB42).